We begin with the raw amino-acid sequence, 926 residues long: Disease resistance protein RPM1 (926 aa).

The tract at residues 10–45 (IGRILSVLENETLLLSGVHGEIDKMKKELLIMKSFL) is leucine-zipper. The NB-ARC domain maps to 153-467 (DAKWVNNISE…AQRFVEPIRG (315 aa)). 200 to 207 (GMGGSGKT) contacts ATP. LRR repeat units lie at residues 561–580 (LHSLLVCSSAKHKMELLPSL), 581–603 (NLLRALDLEDSSISKLPDCLVTM), 605–625 (NLKYLNLSKTQVKELPKNFHK), 626–649 (LVNLETLNTKHSKIEELPLGMWKL), 686–707 (LQVMDCFNAEDELIKNLGCMTQ), 708–731 (LTRISLVMVRREHGRDLCDSLNKI), 756–777 (TASIEKLFLAGKLERVPSWFNT), 778–804 (LQNLTYLGLRGSQLQENAILSIQTLPR), 825–836 (FQNLKILEIVQM), 837–859 (KHLTEVVIEDGAMFELQKLYVRA), and 876–900 (LQELHLIHVSNQLVERIRGEGSVDR).

This sequence belongs to the disease resistance NB-LRR family. As to quaternary structure, interacts directly with RIN4 via its N-terminal region. Interacts (via N-terminus) with RIN2 and RIN3 (via C-terminus). Interacts with TIP49A, a protein known to interact with the TATA binding protein complex (TBP). Binds to MORC1/CRT1. Interacts, via its NB-ARC domain, with RIN13.

It is found in the endomembrane system. It localises to the cell membrane. Functionally, disease resistance (R) protein that specifically recognizes the AvrRpm1 type III effector avirulence protein from Pseudomonas syringae. Resistance proteins guard the plant against pathogens that contain an appropriate avirulence protein via an indirect interaction with this avirulence protein. That triggers a defense system including the hypersensitive response (HR), which restricts the pathogen growth. Acts via its interaction with RIN4, and probably triggers the plant resistance when RIN4 is phosphorylated by AvrRpm1. It is then degraded at the onset of the hypersensitive response. This chain is Disease resistance protein RPM1, found in Arabidopsis thaliana (Mouse-ear cress).